We begin with the raw amino-acid sequence, 113 residues long: Hydrogenase maturation factor HypA (113 aa).

His-2 contacts Ni(2+). Zn(2+) contacts are provided by Cys-73, Cys-76, Cys-89, and Cys-92.

This sequence belongs to the HypA/HybF family.

Involved in the maturation of [NiFe] hydrogenases. Required for nickel insertion into the metal center of the hydrogenase. This Azotobacter vinelandii protein is Hydrogenase maturation factor HypA.